Consider the following 89-residue polypeptide: Pigment dispersing factor homolog pdf-2 (89 aa).

The first 27 residues, 1–27 (MSSRISVSLLLLAVVATMFFTANVVDA), serve as a signal peptide directing secretion.

Probable ligand of isoforms a and b of the calcitonin receptor-like protein, pdfr-1, a G-protein coupled receptor. May not signal through isoform c of pdfr-1. Involved in locomotion; may play a role in circadian rhythms of locomotor activity. Modulator of egg-laying. This Caenorhabditis elegans protein is Pigment dispersing factor homolog pdf-2.